We begin with the raw amino-acid sequence, 218 residues long: Pyrrolidone-carboxylate peptidase (218 aa).

Catalysis depends on residues Glu-81, Cys-144, and His-169.

The protein belongs to the peptidase C15 family. In terms of assembly, homotetramer.

The protein localises to the cytoplasm. It catalyses the reaction Release of an N-terminal pyroglutamyl group from a polypeptide, the second amino acid generally not being Pro.. In terms of biological role, removes 5-oxoproline from various penultimate amino acid residues except L-proline. The sequence is that of Pyrrolidone-carboxylate peptidase (pcp) from Deinococcus radiodurans (strain ATCC 13939 / DSM 20539 / JCM 16871 / CCUG 27074 / LMG 4051 / NBRC 15346 / NCIMB 9279 / VKM B-1422 / R1).